The following is a 1401-amino-acid chain: Lysine-specific demethylase 6A (1401 aa).

The interval 1–1095 (MKSCGVSLAT…TNIDLSDDKK (1095 aa)) is interaction with SUPT6H. TPR repeat units lie at residues 93–126 (SDFF…QSDY), 130–163 (AAFL…DPSF), 170–199 (HLRL…DCNP), 205–238 (AEIQ…ENLS), 250–283 (GWMH…DPNS), 284–317 (GQSW…SEAS), 318–351 (ADTW…DHGH), and 352–385 (AAAW…KSCS). Polar residues predominate over residues 437-449 (AMNTAQQNTSDNW). Positions 437-457 (AMNTAQQNTSDNWSGGHAVSH) are disordered. Position 519 is an omega-N-methylarginine (arginine 519). The segment at 521 to 541 (TGIPNGPTADSSLPTNSVSGQ) is disordered. Residue arginine 549 is modified to Omega-N-methylarginine. 2 stretches are compositionally biased toward polar residues: residues 624-652 (LTSS…SHSA) and 660-724 (LSST…SGNI). 5 disordered regions span residues 624–746 (LTSS…SVEG), 758–778 (AVCS…SDNP), 810–864 (KTDN…ESQS), 914–940 (LLDK…NPPT), and 1043–1079 (FQES…KGPF). Phosphoserine is present on serine 769. Residues 814–833 (SVASSPSSAISTATPSPKST) show a composition bias toward low complexity. Residue threonine 827 is modified to Phosphothreonine. Residue serine 829 is modified to Phosphoserine. Polar residues predominate over residues 834-848 (EQTTTNSVTSLNSPH). Residues 918 to 931 (CPPPRPPSSPYPPL) are compositionally biased toward pro residues. A compositionally biased stretch (basic and acidic residues) spans 1046-1063 (SLREENEKRSHHKDHSDS). The JmjC domain maps to 1095 to 1258 (KWKLQLHELT…YKLAVERYEW (164 aa)). Residues histidine 1146, glutamate 1148, and histidine 1226 each contribute to the Fe cation site. 4 residues coordinate Zn(2+): cysteine 1331, cysteine 1334, cysteine 1358, and cysteine 1361.

Belongs to the UTX family. Interacts with TLE1. Component of the MLL2/3 complex (also named ASCOM complex), at least composed of KMT2D/MLL2 or KMT2C/MLL3, ASH2L, RBBP5, WDR5, NCOA6, DPY30, KDM6A (or KDM6B), PAXIP1/PTIP, PAGR1 and alpha- and beta-tubulin. Interacts with SUPT6H. Interacts with SMARCA4. Interacts with PROSER1. L-ascorbate is required as a cofactor. Requires Fe(2+) as cofactor.

The protein localises to the nucleus. It carries out the reaction N(6),N(6),N(6)-trimethyl-L-lysyl(27)-[histone H3] + 2 2-oxoglutarate + 2 O2 = N(6)-methyl-L-lysyl(27)-[histone H3] + 2 formaldehyde + 2 succinate + 2 CO2. In terms of biological role, histone demethylase that specifically demethylates 'Lys-27' of histone H3, thereby playing a central role in histone code. Demethylates trimethylated and dimethylated but not monomethylated H3 'Lys-27'. Plays a central role in regulation of posterior development, by regulating HOX gene expression. Demethylation of 'Lys-27' of histone H3 is concomitant with methylation of 'Lys-4' of histone H3, and regulates the recruitment of the PRC1 complex and monoubiquitination of histone H2A. Plays a demethylase-independent role in chromatin remodeling to regulate T-box family member-dependent gene expression. This is Lysine-specific demethylase 6A (KDM6A) from Homo sapiens (Human).